A 287-amino-acid chain; its full sequence is Pyridoxal kinase PdxY (287 aa).

Residues S10 and T45 to Q46 each bind substrate. ATP-binding positions include D112, A144, E149, K182, and R209–V212. D224 provides a ligand contact to substrate.

It belongs to the pyridoxine kinase family. PdxY subfamily. Homodimer. Mg(2+) is required as a cofactor.

It carries out the reaction pyridoxal + ATP = pyridoxal 5'-phosphate + ADP + H(+). It functions in the pathway cofactor metabolism; pyridoxal 5'-phosphate salvage; pyridoxal 5'-phosphate from pyridoxal: step 1/1. Its function is as follows. Pyridoxal kinase involved in the salvage pathway of pyridoxal 5'-phosphate (PLP). Catalyzes the phosphorylation of pyridoxal to PLP. The protein is Pyridoxal kinase PdxY of Escherichia coli (strain UTI89 / UPEC).